The following is a 334-amino-acid chain: Protein-methionine-sulfoxide reductase catalytic subunit MsrP (334 aa).

Positions 1–44 (MKKNQFLKESDVTAESVFFMKRRQVLKALGISAAAFSLPHAAHA) form a signal peptide, tat-type signal. Mo-molybdopterin is bound by residues asparagine 88, 91 to 92 (YE), cysteine 146, threonine 181, asparagine 233, arginine 238, and 249 to 251 (GIK).

This sequence belongs to the MsrP family. As to quaternary structure, heterodimer of a catalytic subunit (MsrP) and a heme-binding subunit (MsrQ). It depends on Mo-molybdopterin as a cofactor. Predicted to be exported by the Tat system. The position of the signal peptide cleavage has not been experimentally proven.

It localises to the periplasm. The catalysed reaction is L-methionyl-[protein] + a quinone + H2O = L-methionyl-(S)-S-oxide-[protein] + a quinol. It catalyses the reaction L-methionyl-[protein] + a quinone + H2O = L-methionyl-(R)-S-oxide-[protein] + a quinol. In terms of biological role, part of the MsrPQ system that repairs oxidized periplasmic proteins containing methionine sulfoxide residues (Met-O), using respiratory chain electrons. Thus protects these proteins from oxidative-stress damage caused by reactive species of oxygen and chlorine generated by the host defense mechanisms. MsrPQ is essential for the maintenance of envelope integrity under bleach stress, rescuing a wide series of structurally unrelated periplasmic proteins from methionine oxidation, including the primary periplasmic chaperone SurA and the lipoprotein Pal. The catalytic subunit MsrP is non-stereospecific, being able to reduce both (R-) and (S-) diastereoisomers of methionine sulfoxide. The sequence is that of Protein-methionine-sulfoxide reductase catalytic subunit MsrP from Escherichia coli O7:K1 (strain IAI39 / ExPEC).